A 161-amino-acid chain; its full sequence is Phosphopantetheine adenylyltransferase (161 aa).

Ser11 provides a ligand contact to substrate. Residues 11-12 (SF) and His19 each bind ATP. Lys43, Leu75, and Arg89 together coordinate substrate. Residues 90–92 (GLR), Glu100, and 125–131 (YSYLSSS) contribute to the ATP site.

It belongs to the bacterial CoaD family. As to quaternary structure, homohexamer. Mg(2+) is required as a cofactor.

The protein localises to the cytoplasm. The enzyme catalyses (R)-4'-phosphopantetheine + ATP + H(+) = 3'-dephospho-CoA + diphosphate. The protein operates within cofactor biosynthesis; coenzyme A biosynthesis; CoA from (R)-pantothenate: step 4/5. Functionally, reversibly transfers an adenylyl group from ATP to 4'-phosphopantetheine, yielding dephospho-CoA (dPCoA) and pyrophosphate. The protein is Phosphopantetheine adenylyltransferase of Citrifermentans bemidjiense (strain ATCC BAA-1014 / DSM 16622 / JCM 12645 / Bem) (Geobacter bemidjiensis).